Reading from the N-terminus, the 446-residue chain is MNAQEANFDGLVGPTHNYAGLSFGNVASLNNEKSVANPKAAAKQGLRKMKQLADLGFAQGVLPPQERPSLRLLRELGFSGKDADVIAKAAKQAPELLAAASSASAMWTANAATVSPSADTADGRVHFTPANLCSKLHRAIEHEATRRTLSTLFADRARFAVHDALTGTPALGDEGAANHTRFCAEYGKPGVEFFVYGRSEYRRGPEPKRYPARQTFEASRAVAQRHGLAEEATVYAQQDPDVIDAGVFHNDVISVGNRDTLFTHERAFVNKQAIYDTLTAALDARGARLNVIEVPDAAVSVNDAVTSYLFNSQLLSRADGSQVLVVPQECRENANVAAYLDHLAAGNGPIRDVLVFDLRESMKNGGGPACLRLRVVLTDAERAAVTSNVWIDDTLFTVLDAWIEKHYRDRLAPDDLADPALLVESRTALDELTQILRVGSLYDFQR.

Residues 19–28 (AGLSFGNVAS), N110, and 137–138 (HR) each bind substrate. E174 is an active-site residue. Position 213 (R213) interacts with substrate. The active site involves H249. Residues D251 and N364 each coordinate substrate. Residue C370 is the Nucleophile of the active site.

Belongs to the succinylarginine dihydrolase family. In terms of assembly, homodimer.

It catalyses the reaction N(2)-succinyl-L-arginine + 2 H2O + 2 H(+) = N(2)-succinyl-L-ornithine + 2 NH4(+) + CO2. Its pathway is amino-acid degradation; L-arginine degradation via AST pathway; L-glutamate and succinate from L-arginine: step 2/5. Catalyzes the hydrolysis of N(2)-succinylarginine into N(2)-succinylornithine, ammonia and CO(2). The chain is N-succinylarginine dihydrolase from Burkholderia multivorans (strain ATCC 17616 / 249).